We begin with the raw amino-acid sequence, 193 residues long: Cysteine and glycine-rich protein 1 (193 aa).

One can recognise an LIM zinc-binding 1 domain in the interval 10–61 (CGVCQKTVYFAEEVQCEGSSFHKSCFLCLVCKKNLDSTTVAVHGEEIYCKSC). Positions 64–69 (KKYGPK) match the Nuclear localization signal motif. S81 is modified (phosphoserine). K84, K112, K131, K137, and K161 each carry N6-acetyllysine. The LIM zinc-binding 2 domain maps to 119–170 (CPRCSQAVYAAEKVIGAGKSWHKSCFRCAKCGKGLESTTLADKDGEIYCKGC). The residue at position 192 (S192) is a Phosphoserine.

Interacts with ASCC1; ASCC2 and TRIP4.

Its subcellular location is the nucleus. Could play a role in neuronal development. This chain is Cysteine and glycine-rich protein 1 (CSRP1), found in Bos taurus (Bovine).